Consider the following 344-residue polypeptide: Follistatin (344 aa).

The N-terminal stretch at 1 to 29 (MVCARHQPGGLCLLLLLLCQFMEDRSAQA) is a signal peptide. The TB domain maps to 30-103 (GNCWLRQAKN…TCENVDCGPG (74 aa)). Disulfide bonds link cysteine 32/cysteine 55, cysteine 42/cysteine 88, cysteine 56/cysteine 91, cysteine 95/cysteine 106, cysteine 100/cysteine 116, cysteine 118/cysteine 150, cysteine 122/cysteine 143, cysteine 132/cysteine 164, cysteine 168/cysteine 179, cysteine 173/cysteine 189, cysteine 192/cysteine 225, cysteine 196/cysteine 218, cysteine 207/cysteine 239, cysteine 245/cysteine 256, cysteine 250/cysteine 267, cysteine 270/cysteine 302, cysteine 274/cysteine 295, and cysteine 284/cysteine 316. The Follistatin-like 1 domain maps to 94 to 117 (TCENVDCGPGKKCRMNKKNKPRCV). Residues 112–166 (NKPRCVCAPDCSNITWKGPVCGLDGKTYRNECALLKARCKEQPELEVQYQGKCKK) enclose the Kazal-like 1 domain. Residue asparagine 124 is glycosylated (N-linked (GlcNAc...) asparagine). The Follistatin-like 2 domain occupies 167–190 (TCRDVFCPGSSTCVVDQTNNAYCV). Residues 186 to 241 (NAYCVTCNRICPEPSSSEQSLCGNDGVTYSSACHLRKATCLLGRSIGLAYEGKCIK) enclose the Kazal-like 2 domain. The region spanning 244 to 268 (SCEDIQCGGGKKCLWDFKVGRGRCS) is the Follistatin-like 3 domain. One can recognise a Kazal-like 3 domain in the interval 264 to 318 (RGRCSLCDELCPDSKSDEPVCASDNATYASECAMKEAACSSGVLLEVKHSGSCNS). Residue asparagine 288 is glycosylated (N-linked (GlcNAc...) asparagine). A disordered region spans residues 315–344 (SCNSISEETEEEEEEEDQDYSFPISSTLEW). Positions 321-333 (EETEEEEEEEDQD) are enriched in acidic residues.

In terms of assembly, interacts with GDF11. Interacts with activin A/INHBA. Interacts with myostatin/MSTN.

It localises to the secreted. The protein localises to the nucleus. It is found in the nucleolus. Its function is as follows. Multifunctional regulatory protein whose primary function is to antagonize members of the transforming growth factor beta (TGF-beta) superfamily including activin, myostatin, GDF11 or bone morphogenetic proteins (BMPs). Mechanistically, binds to these ligands in the extracellular space, blocking their type II receptor-binding site to inhibit downstream signaling. Plays an essential role in muscle fiber formation and growth both by preventing the repressive effects of myostatin and through SMAD3/AKT/mTOR signaling independently of myostatin. Also promotes neural differentiation by antagonizing the action BMP4. Acts as a specific inhibitor of the biosynthesis and secretion of pituitary follicle stimulating hormone (FSH) by sequestering activin A/INHBA. On the other hand, translocates into the nucleus where it down-regulates rRNA synthesis and ribosome biogenesis to maintain cellular energy homeostasis by binding to rDNA. This chain is Follistatin, found in Rattus norvegicus (Rat).